We begin with the raw amino-acid sequence, 207 residues long: Galactoside O-acetyltransferase (207 aa).

N87 lines the acetyl-CoA pocket. H117 functions as the Proton donor/acceptor in the catalytic mechanism. Acetyl-CoA contacts are provided by residues A144, A162, T167 to K168, and R185.

This sequence belongs to the transferase hexapeptide repeat family. Homotrimer.

The protein localises to the cytoplasm. It carries out the reaction a beta-D-galactoside + acetyl-CoA = a 6-acetyl-beta-D-galactoside + CoA. The sequence is that of Galactoside O-acetyltransferase (lacA) from Lactococcus lactis subsp. lactis (strain IL1403) (Streptococcus lactis).